An 806-amino-acid polypeptide reads, in one-letter code: DEP domain-containing protein 1A (806 aa).

Positions 24–108 constitute a DEP domain; that stretch reads FRAAMPLRKH…DNNSLYRFPS (85 aa). The tract at residues 142-177 is disordered; sequence QFSKKTPKRRASVDSKEEQENEDLMEDQRNDDDFPK. Over residues 167–177 the composition is skewed to basic and acidic residues; it reads EDQRNDDDFPK. One can recognise a Rho-GAP domain in the interval 279–319; the sequence is DYFLNLPEPLLTFEFYELFVNILVVCGYITVPNSHNGKHRF. A disordered region spans residues 564–588; the sequence is SHSSFPSTSSLLPPTTSPNSTGSES.

The polypeptide is DEP domain-containing protein 1A (depdc1a) (Xenopus laevis (African clawed frog)).